Reading from the N-terminus, the 241-residue chain is Eukaryotic translation initiation factor 3 subunit J (241 aa).

A disordered region spans residues 1-94; the sequence is MDVSWDADNF…EKTAEEMTPE (94 aa). Positions 26–45 are enriched in acidic residues; sequence GEDEDDNVKESWEDEEEEKK. The stretch at 61-118 forms a coiled coil; sequence KKKIHDKIAERERQEREKAERLVTEKTAEEMTPEQKLAEKLRQQKLQEESDLRLAMET. Positions 66 to 89 are enriched in basic and acidic residues; sequence DKIAERERQEREKAERLVTEKTAE.

It belongs to the eIF-3 subunit J family. As to quaternary structure, component of the eukaryotic translation initiation factor 3 (eIF-3) complex.

Its subcellular location is the cytoplasm. Functionally, component of the eukaryotic translation initiation factor 3 (eIF-3) complex, which is involved in protein synthesis of a specialized repertoire of mRNAs and, together with other initiation factors, stimulates binding of mRNA and methionyl-tRNAi to the 40S ribosome. The eIF-3 complex specifically targets and initiates translation of a subset of mRNAs involved in cell proliferation. The polypeptide is Eukaryotic translation initiation factor 3 subunit J (Bombyx mori (Silk moth)).